The sequence spans 79 residues: Exodeoxyribonuclease 7 small subunit (79 aa).

This sequence belongs to the XseB family. In terms of assembly, heterooligomer composed of large and small subunits.

It localises to the cytoplasm. It catalyses the reaction Exonucleolytic cleavage in either 5'- to 3'- or 3'- to 5'-direction to yield nucleoside 5'-phosphates.. Its function is as follows. Bidirectionally degrades single-stranded DNA into large acid-insoluble oligonucleotides, which are then degraded further into small acid-soluble oligonucleotides. The chain is Exodeoxyribonuclease 7 small subunit from Lactococcus lactis subsp. cremoris (strain MG1363).